The following is a 164-amino-acid chain: SsrA-binding protein (164 aa).

This sequence belongs to the SmpB family.

It is found in the cytoplasm. Functionally, required for rescue of stalled ribosomes mediated by trans-translation. Binds to transfer-messenger RNA (tmRNA), required for stable association of tmRNA with ribosomes. tmRNA and SmpB together mimic tRNA shape, replacing the anticodon stem-loop with SmpB. tmRNA is encoded by the ssrA gene; the 2 termini fold to resemble tRNA(Ala) and it encodes a 'tag peptide', a short internal open reading frame. During trans-translation Ala-aminoacylated tmRNA acts like a tRNA, entering the A-site of stalled ribosomes, displacing the stalled mRNA. The ribosome then switches to translate the ORF on the tmRNA; the nascent peptide is terminated with the 'tag peptide' encoded by the tmRNA and targeted for degradation. The ribosome is freed to recommence translation, which seems to be the essential function of trans-translation. The chain is SsrA-binding protein from Shewanella sediminis (strain HAW-EB3).